We begin with the raw amino-acid sequence, 196 residues long: ATP-dependent Clp protease proteolytic subunit (196 aa).

Residue Ser96 is the Nucleophile of the active site. His121 is a catalytic residue.

This sequence belongs to the peptidase S14 family. In terms of assembly, fourteen ClpP subunits assemble into 2 heptameric rings which stack back to back to give a disk-like structure with a central cavity, resembling the structure of eukaryotic proteasomes.

The protein resides in the cytoplasm. The catalysed reaction is Hydrolysis of proteins to small peptides in the presence of ATP and magnesium. alpha-casein is the usual test substrate. In the absence of ATP, only oligopeptides shorter than five residues are hydrolyzed (such as succinyl-Leu-Tyr-|-NHMec, and Leu-Tyr-Leu-|-Tyr-Trp, in which cleavage of the -Tyr-|-Leu- and -Tyr-|-Trp bonds also occurs).. Its function is as follows. Cleaves peptides in various proteins in a process that requires ATP hydrolysis. Has a chymotrypsin-like activity. Plays a major role in the degradation of misfolded proteins. In Streptococcus sanguinis (strain SK36), this protein is ATP-dependent Clp protease proteolytic subunit.